The primary structure comprises 862 residues: Protein kintoun (862 aa).

4 disordered regions span residues 208 to 229 (KLLP…RTTK), 564 to 602 (TKRE…KKER), 626 to 670 (GEGA…STMP), and 743 to 854 (RREV…QFKS). Residues 564–586 (TKREEHGEPECDEKDGSEAEKAR) show a composition bias toward basic and acidic residues. The span at 587–601 (TLQKAKRNSRKKKKE) shows a compositional bias: basic residues. Basic and acidic residues-rich tracts occupy residues 748–757 (RRADARRMSE) and 766–785 (KDAH…HDEK).

Belongs to the PIH1 family. Kintoun subfamily.

Its subcellular location is the cytoplasm. Its function is as follows. Required for cytoplasmic pre-assembly of axonemal dyneins, thereby playing a central role in motility in cilia and flagella. Involved in pre-assembly of dynein arm complexes in the cytoplasm before intraflagellar transport loads them for the ciliary compartment. This Anopheles gambiae (African malaria mosquito) protein is Protein kintoun.